A 206-amino-acid chain; its full sequence is Small ribosomal subunit protein uS4 (206 aa).

An S4 RNA-binding domain is found at 96–158 (SRLDNVVYRM…AKKQSRIKAA (63 aa)).

Belongs to the universal ribosomal protein uS4 family. In terms of assembly, part of the 30S ribosomal subunit. Contacts protein S5. The interaction surface between S4 and S5 is involved in control of translational fidelity.

In terms of biological role, one of the primary rRNA binding proteins, it binds directly to 16S rRNA where it nucleates assembly of the body of the 30S subunit. With S5 and S12 plays an important role in translational accuracy. This Wigglesworthia glossinidia brevipalpis protein is Small ribosomal subunit protein uS4.